A 172-amino-acid polypeptide reads, in one-letter code: Inorganic pyrophosphatase (172 aa).

The substrate site is built by K29, R43, and Y55. 3 residues coordinate Mg(2+): D65, D70, and D102. Y141 serves as a coordination point for substrate.

The protein belongs to the PPase family. Homohexamer. The cofactor is Mg(2+).

It is found in the cytoplasm. The catalysed reaction is diphosphate + H2O = 2 phosphate + H(+). In terms of biological role, catalyzes the hydrolysis of inorganic pyrophosphate (PPi) forming two phosphate ions. The sequence is that of Inorganic pyrophosphatase from Rickettsia prowazekii (strain Madrid E).